The following is a 356-amino-acid chain: MASTVPSTMKAWQFSSAYPTIEANLKLNNNAPLPDGAKNLGPDQVLVKVIAAGLNPVDFKFAEIPWLGRFIVGSPSTPGMDFAGRVVATGPNTKSVAVEDLKPGQLVFGRLDSPCKFGTLAEYTIAPRKGCVAIPPGARVIETACVASVGLTAYQSIVYRLKDHAGKRVFLNGGSGGCGTFGIQIAKQMGCHVTTSCSTPNVDLCRSLGADTVIDYKKTDVIAELKKMQPFDLVVDNVGVPTDLYWAAPSFTNPGAPYVQVGALAVTPGFILGNFFKARWPGWLGGGKRPWEFMHIESNVQDYEQLGRWMQEGKLRAVVDEVFGMQDDGAVKAYQKLRTGRAKGKIIVKIDETWED.

NADP(+) is bound by residues 57–60 (VDFK), 175–178 (SGGC), 198–201 (STPN), Tyr-216, 261–262 (VG), and 342–343 (AK).

This sequence belongs to the zinc-containing alcohol dehydrogenase family.

In terms of biological role, FAD-linked oxidoreductase; part of the gene cluster that mediates the biosynthesis of pleosporalin A, ascomycone A, as well as a third cryptic naphthoquinone derived pigment, all responsible for the coloration of conidia. The pathway begins with the biosynthesis of the cyclized heptaketide 3-acetonyl-1,6,8-trihydroxy-2-naphthaldehyde by the NR-PKS pgmA. The C-6 hydroxyl group is further methylated by the O-methyltransferase pgmB to yield fusarubinaldehyde which is in turn oxidized by the cytochrome P450 monooxygenase pgmC at C-9. The C-1 hydroxyl group is then methylated spontaneously. Although pgmE, pgmD and pgmH are essential for the production of pleosporalin A, it is not the case for the 2 other final products and it remains difficult to assign a specific function to each enzyme. PgmF and pgmG seem not to be involved in pigment biosynthesis although they were regulated by the cluster-specific transcription factor pgmR. The polypeptide is Trans-enoyl reductase pgmF (Aspergillus terreus (strain NIH 2624 / FGSC A1156)).